The sequence spans 367 residues: Mitochondrial distribution and morphology protein 34 (367 aa).

One can recognise an SMP-LTD domain in the interval Met-1–Gln-197. Disordered regions lie at residues Gln-267–Ser-311 and Pro-347–Ser-367. Over residues Phe-286–Ala-302 the composition is skewed to polar residues.

Belongs to the MDM34 family. As to quaternary structure, component of the ER-mitochondria encounter structure (ERMES) or MDM complex, composed of MMM1, MDM10, MDM12 and MDM34.

Its subcellular location is the mitochondrion outer membrane. Functionally, component of the ERMES/MDM complex, which serves as a molecular tether to connect the endoplasmic reticulum (ER) and mitochondria. Components of this complex are involved in the control of mitochondrial shape and protein biogenesis, and function in nonvesicular lipid trafficking between the ER and mitochondria. MDM34 is required for the interaction of the ER-resident membrane protein MMM1 and the outer mitochondrial membrane-resident beta-barrel protein MDM10. The protein is Mitochondrial distribution and morphology protein 34 of Malassezia globosa (strain ATCC MYA-4612 / CBS 7966) (Dandruff-associated fungus).